The sequence spans 211 residues: Ribosomal RNA small subunit methyltransferase G (211 aa).

Residues G76, L81, 127–128, and R142 each bind S-adenosyl-L-methionine; that span reads VE.

Belongs to the methyltransferase superfamily. RNA methyltransferase RsmG family.

It is found in the cytoplasm. It carries out the reaction guanosine(527) in 16S rRNA + S-adenosyl-L-methionine = N(7)-methylguanosine(527) in 16S rRNA + S-adenosyl-L-homocysteine. Functionally, specifically methylates the N7 position of guanine in position 527 of 16S rRNA. The chain is Ribosomal RNA small subunit methyltransferase G from Vibrio campbellii (strain ATCC BAA-1116).